Here is a 706-residue protein sequence, read N- to C-terminus: Elongation factor G (706 aa).

The tr-type G domain maps to 15–291 (LKTRNIGISA…GVLDYLASPV (277 aa)). GTP contacts are provided by residues 24–31 (AHIDSGKT), 91–95 (DTPGH), and 145–148 (NKLD).

It belongs to the TRAFAC class translation factor GTPase superfamily. Classic translation factor GTPase family. EF-G/EF-2 subfamily.

It is found in the cytoplasm. In terms of biological role, catalyzes the GTP-dependent ribosomal translocation step during translation elongation. During this step, the ribosome changes from the pre-translocational (PRE) to the post-translocational (POST) state as the newly formed A-site-bound peptidyl-tRNA and P-site-bound deacylated tRNA move to the P and E sites, respectively. Catalyzes the coordinated movement of the two tRNA molecules, the mRNA and conformational changes in the ribosome. In Leptospira borgpetersenii serovar Hardjo-bovis (strain L550), this protein is Elongation factor G.